The primary structure comprises 407 residues: Inactive non-canonical poly(A) RNA polymerase protein Trf4-2 (407 aa).

Asp-85 and Asp-87 together coordinate Mg(2+). Residues 221-280 (LALLLIQFLDYYGRKFDFFKYGISVLGQGGCVEKARLRSTLGENNWQSVLCIEDPVTPTN) enclose the PAP-associated domain. Residues 354–390 (LVQPSPTGSTSPSASASASEDERSGGPATIGFGRCDD) form a disordered region. Over residues 357 to 371 (PSPTGSTSPSASASA) the composition is skewed to low complexity.

It belongs to the DNA polymerase type-B-like family.

The sequence is that of Inactive non-canonical poly(A) RNA polymerase protein Trf4-2 from Drosophila melanogaster (Fruit fly).